The primary structure comprises 240 residues: uncharacterized protein (240 aa).

The disordered stretch occupies residues 93–160 (QEASGCTVGE…AGGGAAASGQ (68 aa)). 2 stretches are compositionally biased toward low complexity: residues 110 to 119 (AQPSQPAQGG) and 129 to 150 (GGAEEAGGAQASQPAESAPAEN).

This is an uncharacterized protein from Streptomyces viridochromogenes.